Reading from the N-terminus, the 172-residue chain is Small ribosomal subunit protein uS4 (172 aa).

The region spanning 104-168 is the S4 RNA-binding domain; it reads RRLQTIVYRK…SPLAKMAQGG (65 aa).

Belongs to the universal ribosomal protein uS4 family. As to quaternary structure, part of the 30S ribosomal subunit. Contacts protein S5. The interaction surface between S4 and S5 is involved in control of translational fidelity.

Its function is as follows. One of the primary rRNA binding proteins, it binds directly to 16S rRNA where it nucleates assembly of the body of the 30S subunit. In terms of biological role, with S5 and S12 plays an important role in translational accuracy. This is Small ribosomal subunit protein uS4 from Thermofilum pendens (strain DSM 2475 / Hrk 5).